Consider the following 790-residue polypeptide: Accumulates dyads protein 3 (790 aa).

The disordered stretch occupies residues 8-122; it reads LNKPESLKEQ…NTLKSPNKFL (115 aa). The segment covering 39–49 has biased composition (basic and acidic residues); that stretch reads PESKPFRERRS. Composition is skewed to polar residues over residues 50-78 and 89-108; these read QTWIDSEVPTSTEKSNVQESISSDIISKL and ESWAGSEASSPSGNISTLEN. 4 coiled-coil regions span residues 241–328, 361–430, 477–498, and 540–658; these read ISKE…REEK, LVSE…RLND, KNLENMEQYKQLKGKIELLEKN, and QQFR…LKKL.

Interacts directly with SSP1. Probable component of a SPB complex composed of ADY3, SSP1, DON1, MPC54, SPO21/MPC70, NUD1 and CNM67. Phosphorylated.

It is found in the prospore membrane. Its subcellular location is the cytoplasm. The protein resides in the cytoskeleton. The protein localises to the microtubule organizing center. It localises to the spindle pole body. In terms of biological role, involved in the pathway that organizes the prospore membrane (PSM) during sporulation. Mediates the assembly of the DON1 ring structure at the leading edge of PSM during meiosis II. May constitute a physical link between SSP1-containing PSM precursors and the spindle pole body (SPB) and may facilitate the recruitment of other factors that are required to promote spore wall formation. The polypeptide is Accumulates dyads protein 3 (ADY3) (Saccharomyces cerevisiae (strain ATCC 204508 / S288c) (Baker's yeast)).